Reading from the N-terminus, the 943-residue chain is Conidiophore development regulator abaA (943 aa).

Disordered regions lie at residues 1–69 (MSSS…FNGG) and 111–133 (TSRQ…HQRG). The segment covering 29–43 (IDTRRSFHGDSRLPL) has biased composition (basic and acidic residues). A compositionally biased stretch (polar residues) spans 59–68 (PSSAHSSFNG). The TEA DNA-binding region spans 161–254 (QKDKGGVWRR…QVVKKFFEDL (94 aa)). Positions 537–555 (EHQRKKEKRSCGKKPDLER) are enriched in basic and acidic residues. 2 disordered regions span residues 537 to 575 (EHQR…AAWT) and 809 to 901 (GAAG…HHPG). The span at 865-889 (DSWTAGSSAGGAPAATPTGPDWGPT) shows a compositional bias: low complexity.

It belongs to the TEC1 family.

It is found in the nucleus. Its function is as follows. BrlA, abaA and wetA are pivotal regulators of conidiophore development and conidium maturation. They act individually and together to regulate their own expression and that of numerous other sporulation-specific genes. Binds to the sequence 5'-CATTCY-3', where Y is a pyrimidine, making both major- and minor-groove contacts. The chain is Conidiophore development regulator abaA from Hapsidospora chrysogena (Acremonium chrysogenum).